Reading from the N-terminus, the 416-residue chain is Choline/ethanolaminephosphotransferase 1 (416 aa).

The interval 1 to 20 (MSGHRSTRKRCGDSHPESPV) is disordered. A Phosphoserine modification is found at Ser18. At Thr40 the chain carries Phosphothreonine. Asn86 lines the CDP-choline pocket. 2 helical membrane-spanning segments follow: residues 89 to 108 (TIIGLSINICTTILLVFYCP) and 116 to 133 (LWAYIACACGLFIYQSLD). Asp133 serves as a coordination point for Mg(2+). Asn144 is a glycosylation site (N-linked (GlcNAc...) asparagine). Glu151 provides a ligand contact to CDP-choline. Residue Asp154 participates in Mg(2+) binding. The active-site Proton acceptor is the His155. The next 8 membrane-spanning stretches (helical) occupy residues 156–176 (GCDSLSTVFVVLGTCIAVQLG), 180–199 (DWMFFCCFAGTFMFYCAHWQ), 210–230 (IIDVTEVQIFIIIMHLLAVIG), 246–267 (MKIFPALCTVAGTIFSCTNYFR), 286–306 (VLSPFLHIGSVITLAAMIYKK), 315–334 (HPCLYILTFGFVSAKITNKL), 349–363 (TAFIGPALLFLDQYF), and 368–388 (DEYIVLWIALVFSFFDLIRYC). Asp158 serves as a coordination point for Mg(2+).

It belongs to the CDP-alcohol phosphatidyltransferase class-I family. In terms of assembly, homodimer. The cofactor is Mg(2+). It depends on Mn(2+) as a cofactor. In terms of tissue distribution, ubiquitously expressed.

It localises to the endoplasmic reticulum membrane. The protein localises to the nucleus membrane. The enzyme catalyses CDP-ethanolamine + a 1,2-diacyl-sn-glycerol = a 1,2-diacyl-sn-glycero-3-phosphoethanolamine + CMP + H(+). The catalysed reaction is CDP-choline + a 1,2-diacyl-sn-glycerol = a 1,2-diacyl-sn-glycero-3-phosphocholine + CMP + H(+). It catalyses the reaction 1-O-alkyl-2-acyl-sn-glycerol + CDP-choline = a 1-O-alkyl-2-acyl-sn-glycero-3-phosphocholine + CMP + H(+). It carries out the reaction a 1-O-(1Z-alkenyl)-2-acyl-sn-glycerol + CDP-choline = a 1-O-(1Z-alkenyl)-2-acyl-sn-glycero-3-phosphocholine + CMP + H(+). The enzyme catalyses 1,2-dioctanoyl-sn-glycerol + CDP-choline = 1,2-dioctanoyl-sn-glycero-3-phosphocholine + CMP + H(+). The catalysed reaction is 1,2-didecanoyl-sn-glycerol + CDP-choline = 1,2-didecanoyl-sn-glycero-3-phosphocholine + CMP + H(+). It catalyses the reaction CDP-choline + 1,2-di-(9Z-octadecenoyl)-sn-glycerol = 1,2-di-(9Z-octadecenoyl)-sn-glycero-3-phosphocholine + CMP + H(+). It carries out the reaction 1-hexadecanoyl-2-(9Z-octadecenoyl)-sn-glycerol + CDP-choline = 1-hexadecanoyl-2-(9Z-octadecenoyl)-sn-glycero-3-phosphocholine + CMP + H(+). The enzyme catalyses CDP-ethanolamine + 1,2-di-(9Z-octadecenoyl)-sn-glycerol = 1,2-di-(9Z-octadecenoyl)-sn-glycero-3-phosphoethanolamine + CMP + H(+). The catalysed reaction is 1-hexadecanoyl-2-(9Z-octadecenoyl)-sn-glycerol + CDP-ethanolamine = 1-hexadecanoyl-2-(9Z-octadecenoyl)-sn-glycero-3-phosphoethanolamine + CMP + H(+). It catalyses the reaction 1-hexadecanoyl-2-(4Z,7Z,10Z,13Z,16Z,19Z-docosahexaenoyl)-sn-glycerol + CDP-choline = 1-hexadecanoyl-2-(4Z,7Z,10Z,13Z,16Z,19Z-docosahexaenoyl)-sn-glycero-3-phosphocholine + CMP + H(+). It carries out the reaction 1,2-di-(9Z-hexadecenoyl)-sn-glycerol + CDP-choline = 1,2-di-(9Z-hexadecenoyl)-sn-glycero-3-phosphocholine + CMP + H(+). The enzyme catalyses 1,2-di-(9Z-hexadecenoyl)-sn-glycerol + CDP-ethanolamine = 1,2-di-(9Z-hexadecenoyl)-sn-glycero-3-phosphoethanolamine + CMP + H(+). The catalysed reaction is 1-O-hexadecyl-2-acetyl-sn-glycerol + CDP-choline = 1-O-hexadecyl-2-acetyl-sn-glycero-3-phosphocholine + CMP + H(+). It catalyses the reaction 1-O-hexadecyl-2-(5Z,8Z,11Z,14Z-eicosatetraenoyl)-sn-glycerol + CDP-choline = 1-O-hexadecyl-2-(5Z,8Z,11Z,14Z)-eicosatetraenoyl-sn-glycero-3-phosphocholine + CMP + H(+). The protein operates within phospholipid metabolism; phosphatidylethanolamine biosynthesis; phosphatidylethanolamine from ethanolamine: step 3/3. Its pathway is phospholipid metabolism; phosphatidylcholine biosynthesis; phosphatidylcholine from phosphocholine: step 2/2. In terms of biological role, catalyzes both phosphatidylcholine and phosphatidylethanolamine biosynthesis from CDP-choline and CDP-ethanolamine, respectively. Involved in protein-dependent process of phospholipid transport to distribute phosphatidyl choline to the lumenal surface. Has a higher cholinephosphotransferase activity than ethanolaminephosphotransferase activity. This Homo sapiens (Human) protein is Choline/ethanolaminephosphotransferase 1.